A 245-amino-acid polypeptide reads, in one-letter code: 1-(5-phosphoribosyl)-5-[(5-phosphoribosylamino)methylideneamino] imidazole-4-carboxamide isomerase (245 aa).

Asp-7 functions as the Proton acceptor in the catalytic mechanism. Asp-129 functions as the Proton donor in the catalytic mechanism.

The protein belongs to the HisA/HisF family.

It is found in the cytoplasm. The enzyme catalyses 1-(5-phospho-beta-D-ribosyl)-5-[(5-phospho-beta-D-ribosylamino)methylideneamino]imidazole-4-carboxamide = 5-[(5-phospho-1-deoxy-D-ribulos-1-ylimino)methylamino]-1-(5-phospho-beta-D-ribosyl)imidazole-4-carboxamide. The protein operates within amino-acid biosynthesis; L-histidine biosynthesis; L-histidine from 5-phospho-alpha-D-ribose 1-diphosphate: step 4/9. The sequence is that of 1-(5-phosphoribosyl)-5-[(5-phosphoribosylamino)methylideneamino] imidazole-4-carboxamide isomerase from Buchnera aphidicola subsp. Cinara cedri (strain Cc).